Here is a 163-residue protein sequence, read N- to C-terminus: Urease accessory protein UreE (163 aa).

Residues 144–163 (QPEPGAYGGSSAGSHDGHHH) form a disordered region.

Belongs to the UreE family.

It is found in the cytoplasm. Functionally, involved in urease metallocenter assembly. Binds nickel. Probably functions as a nickel donor during metallocenter assembly. This Aliivibrio fischeri (strain MJ11) (Vibrio fischeri) protein is Urease accessory protein UreE.